The sequence spans 142 residues: Large ribosomal subunit protein uL13 (142 aa).

The protein belongs to the universal ribosomal protein uL13 family. As to quaternary structure, part of the 50S ribosomal subunit.

This protein is one of the early assembly proteins of the 50S ribosomal subunit, although it is not seen to bind rRNA by itself. It is important during the early stages of 50S assembly. The chain is Large ribosomal subunit protein uL13 from Aliivibrio fischeri (strain ATCC 700601 / ES114) (Vibrio fischeri).